The following is a 91-amino-acid chain: Small ribosomal subunit protein uS15 (91 aa).

Belongs to the universal ribosomal protein uS15 family. As to quaternary structure, part of the 30S ribosomal subunit. Forms a bridge to the 50S subunit in the 70S ribosome, contacting the 23S rRNA.

Functionally, one of the primary rRNA binding proteins, it binds directly to 16S rRNA where it helps nucleate assembly of the platform of the 30S subunit by binding and bridging several RNA helices of the 16S rRNA. Its function is as follows. Forms an intersubunit bridge (bridge B4) with the 23S rRNA of the 50S subunit in the ribosome. This chain is Small ribosomal subunit protein uS15, found in Rickettsia africae (strain ESF-5).